We begin with the raw amino-acid sequence, 810 residues long: RING finger protein unkempt homolog (810 aa).

The disordered stretch occupies residues 1-24 (MSKGPGPGGSAASSAPPAATAQVL). Residues 10 to 19 (SAASSAPPAA) show a composition bias toward low complexity. 5 C3H1-type zinc fingers span residues 84 to 113 (YSPD…HRTT), 124 to 154 (YYKT…HGPH), 215 to 241 (NYKT…HNSK), 251 to 285 (KYRS…HTRT), and 293 to 321 (IYKS…HVEQ). Residues 239–265 (NSKDRRRSPRKHKYRSSPCPNVKHGDE) form a disordered region. The residue at position 240 (serine 240) is a Phosphoserine. Basic residues predominate over residues 241–253 (KDRRRSPRKHKYR). The segment at 324-343 (LSDDLQPSSTVSSPTQPGPV) is disordered. The segment covering 329-343 (QPSSTVSSPTQPGPV) has biased composition (low complexity). Phosphoserine occurs at positions 374, 378, and 385. Over residues 569–585 (SASFHSASPSPPVSLSS) the composition is skewed to low complexity. A disordered region spans residues 569-602 (SASFHSASPSPPVSLSSHFLQQPQGHLSQSENTF). A compositionally biased stretch (polar residues) spans 586–602 (HFLQQPQGHLSQSENTF). Serine 631 is subject to Phosphoserine. Positions 643–723 (GAAELARLRQ…QEELERLHSG (81 aa)) form a coiled coil. The RING-type; degenerate zinc-finger motif lies at 766-801 (SVKCLKCQEQNRAVLPCQHAVLCELCAEGSECPVCQ).

The protein belongs to the unkempt family.

The protein localises to the cytoplasm. In terms of biological role, sequence-specific RNA-binding protein which plays an important role in the establishment and maintenance of the early morphology of cortical neurons during embryonic development. Acts as a translation repressor and controls a translationally regulated cell morphology program to ensure proper structuring of the nervous system. Translational control depends on recognition of its binding element within target mRNAs which consists of a mandatory UAG trimer upstream of a U/A-rich motif. Associated with polysomes. This Canis lupus familiaris (Dog) protein is RING finger protein unkempt homolog (UNK).